We begin with the raw amino-acid sequence, 341 residues long: Thromboxane A2 receptor (341 aa).

Over Met1–Trp29 the chain is Extracellular. Asn4 and Asn16 each carry an N-linked (GlcNAc...) asparagine glycan. Residues Phe30 to Ala52 traverse the membrane as a helical segment. Residues Arg53–Leu65 are Cytoplasmic-facing. Residues Leu66–Ser86 form a helical membrane-spanning segment. The Extracellular segment spans residues Gln87–His105. Cys104 and Cys181 are joined by a disulfide. Residues Phe106–Ala127 traverse the membrane as a helical segment. Over Glu128 to Ala147 the chain is Cytoplasmic. A helical membrane pass occupies residues Trp148–Gly170. The Extracellular segment spans residues Arg171–Asp191. Residues Val192–Val217 traverse the membrane as a helical segment. Residues Ala218–Leu244 lie on the Cytoplasmic side of the membrane. Residues Val245–Gln268 form a helical membrane-spanning segment. The Extracellular portion of the chain corresponds to Thr269–Leu287. Residues Leu288–Arg309 traverse the membrane as a helical segment. The Cytoplasmic portion of the chain corresponds to Arg310–Pro341. The residue at position 328 (Ser328) is a Phosphoserine.

The protein belongs to the G-protein coupled receptor 1 family. In terms of assembly, interacts with RPGRIP1L. Interacts with RACK1; the interaction regulates TBXA2R cell surface expression. In the brain, expressed in all types of glial cells. In the kidney, expressed in the mesangial cells of the glomerulus, smooth muscle cells of the renal arterioles, and in transitional cell epithelium of renal pelvis.

The protein localises to the cell membrane. Its function is as follows. Receptor for thromboxane A2 (TXA2), a potent stimulator of platelet aggregation. The activity of this receptor is mediated by a G-protein that activates a phosphatidylinositol-calcium second messenger system. In the kidney, the binding of TXA2 to glomerular TP receptors causes intense vasoconstriction. Activates phospholipase C and adenylyl cyclase. In Rattus norvegicus (Rat), this protein is Thromboxane A2 receptor (Tbxa2r).